Consider the following 297-residue polypeptide: Oxidoreductase aprR (297 aa).

Belongs to the NmrA-type oxidoreductase family. Isoflavone reductase subfamily.

It participates in secondary metabolite biosynthesis. Functionally, oxidoreductase; part of the gene cluster that mediates the biosynthesis of the asperipin-2a, a bicyclic peptide that possesses two macrocyclic ether rings consisting of 14- and 17-membered paracyclophans. The pathway starts with the processing of the precursor aprA by kexin proteases to produce 11 identical copies of the hexapeptide Phe-Tyr-Tyr-Thr-Gly-Tyr. Macrocyclization of asperipin-2a may accompany an alpha-hydroxylation-dehydration sequence to give an imine, which is readily hydrolyzed to yield putative ketone intermediate. The reductase aprR may be required for the final reduction to yield asperipin-2a. The chain is Oxidoreductase aprR from Aspergillus flavus (strain ATCC 200026 / FGSC A1120 / IAM 13836 / NRRL 3357 / JCM 12722 / SRRC 167).